The primary structure comprises 670 residues: Extracellular matrix protein 2 (670 aa).

Positions 1-19 are cleaved as a signal peptide; it reads MKLAVLFCFILLIVLQTDC. One can recognise a VWFC domain in the interval 96 to 153; sequence GYCFVKGMIMYNKAVWSPEPCTTCLCSNGRVLCDETECHPKACPYTIKPEGECCPICS. A disordered region spans residues 185 to 270; that stretch reads SEEDEEIAEG…EEDAIRGDVF (86 aa). A compositionally biased stretch (basic and acidic residues) spans 192 to 227; the sequence is AEGHKEHKKETSVPTKIHGDGERTERKLRPEKEGRS. Acidic residues predominate over residues 241 to 263; it reads ESKEETEREGEEEEEEEEEEEED. Residues 266–268 carry the Cell attachment site motif; sequence RGD. Residues 278–315 form the LRRNT domain; that stretch reads PGTPRGRPRLPRSCSLSYRTISCVHADFTEIPPITAPE. LRR repeat units lie at residues 339–359, 365–386, 387–407, 410–430, 436–456, 457–478, 481–501, 507–528, 529–549, 553–573, 580–601, 603–624, and 632–655; these read NLER…GPKA, KLMR…LPST, LEEL…SLSD, QLVT…DPLA, SLSY…GLPA, STEE…CFNH, KITM…APLA, NLES…LPKS, LLHL…VFGH, GLEY…DLVS, SLRE…IQDM, ALHF…QICN, and ALEH…AFSC. A glycan (N-linked (GlcNAc...) asparagine) is linked at Asn349. Asn420 is a glycosylation site (N-linked (GlcNAc...) asparagine). A glycan (N-linked (GlcNAc...) asparagine) is linked at Asn477.

The protein belongs to the small leucine-rich proteoglycan (SLRP) family. SLRP class I subfamily. In terms of assembly, interacts with numerous extracellular matrix proteins. Interacts with isoform 1 of MSL1. Interacts with isoform 3 of RASSF1.

The protein localises to the secreted. The protein resides in the extracellular space. It is found in the extracellular matrix. Promotes matrix assembly and cell adhesiveness. In Mus musculus (Mouse), this protein is Extracellular matrix protein 2 (Ecm2).